Here is a 283-residue protein sequence, read N- to C-terminus: MLRSRVTVFGILNLTEDSFFDESRRLDPAGAVTAAIEMLRVGSDVVDVGPAASHPDARPVSPADEIRRIAPLLDALSDQMHRVSIDSFQPETQRYALKRGVGYLNDIQGFPDPALYPDIAEADCRLVVMHSAQRDGIATRTGHLRPEDALDEIVRFFEARVSALRRSGVAADRLILDPGMGFFLSPAPETSLHVLSNLQKLKSALGLPLLVSVSRKSFLGATVGLPVKDLGPASLAAELHAIGNGADYVRTHAPGDLRSAITFSETLAKFRSRDARDRGLDHA.

Residues 6-262 form the Pterin-binding domain; the sequence is VTVFGILNLT…APGDLRSAIT (257 aa). N13 provides a ligand contact to Mg(2+). (7,8-dihydropterin-6-yl)methyl diphosphate-binding positions include D86, N105, D177, K216, and 250-252; that span reads RTH.

Belongs to the DHPS family. As to quaternary structure, homodimer or homotrimer. Mg(2+) serves as cofactor.

The enzyme catalyses (7,8-dihydropterin-6-yl)methyl diphosphate + 4-aminobenzoate = 7,8-dihydropteroate + diphosphate. It functions in the pathway cofactor biosynthesis; tetrahydrofolate biosynthesis; 7,8-dihydrofolate from 2-amino-4-hydroxy-6-hydroxymethyl-7,8-dihydropteridine diphosphate and 4-aminobenzoate: step 1/2. Catalyzes the condensation of para-aminobenzoate (pABA) with 6-hydroxymethyl-7,8-dihydropterin diphosphate (DHPt-PP) to form 7,8-dihydropteroate (H2Pte), the immediate precursor of folate derivatives. Implicated in resistance to sulfonamide. This chain is Dihydropteroate synthase type-1 (sulI), found in Mycolicibacterium fortuitum (Mycobacterium fortuitum).